We begin with the raw amino-acid sequence, 127 residues long: Large ribosomal subunit protein bL20 (127 aa).

This sequence belongs to the bacterial ribosomal protein bL20 family.

In terms of biological role, binds directly to 23S ribosomal RNA and is necessary for the in vitro assembly process of the 50S ribosomal subunit. It is not involved in the protein synthesizing functions of that subunit. The sequence is that of Large ribosomal subunit protein bL20 from Akkermansia muciniphila (strain ATCC BAA-835 / DSM 22959 / JCM 33894 / BCRC 81048 / CCUG 64013 / CIP 107961 / Muc).